The following is a 335-amino-acid chain: Glyceraldehyde-3-phosphate dehydrogenase 2 (335 aa).

NAD(+) is bound by residues 12–13 (RI), D35, R79, and S121. D-glyceraldehyde 3-phosphate is bound by residues 152-154 (SCT) and T183. C153 functions as the Nucleophile in the catalytic mechanism. N184 is an NAD(+) binding site. D-glyceraldehyde 3-phosphate-binding positions include R198, 211–212 (TG), and R234. N316 serves as a coordination point for NAD(+).

The protein belongs to the glyceraldehyde-3-phosphate dehydrogenase family. As to quaternary structure, homotetramer.

The protein resides in the cytoplasm. It catalyses the reaction D-glyceraldehyde 3-phosphate + phosphate + NAD(+) = (2R)-3-phospho-glyceroyl phosphate + NADH + H(+). It participates in carbohydrate degradation; glycolysis; pyruvate from D-glyceraldehyde 3-phosphate: step 1/5. Its activity is regulated as follows. Inhibited by pentalenolactone. Catalyzes the oxidative phosphorylation of glyceraldehyde 3-phosphate (G3P) to 1,3-bisphosphoglycerate (BPG) using the cofactor NAD. The first reaction step involves the formation of a hemiacetal intermediate between G3P and a cysteine residue, and this hemiacetal intermediate is then oxidized to a thioester, with concomitant reduction of NAD to NADH. The reduced NADH is then exchanged with the second NAD, and the thioester is attacked by a nucleophilic inorganic phosphate to produce BPG. The chain is Glyceraldehyde-3-phosphate dehydrogenase 2 (gap2) from Streptomyces avermitilis (strain ATCC 31267 / DSM 46492 / JCM 5070 / NBRC 14893 / NCIMB 12804 / NRRL 8165 / MA-4680).